A 520-amino-acid chain; its full sequence is Glutamate decarboxylase-like protein FG08083 (520 aa).

86 to 88 (KLV) serves as a coordination point for substrate. Lys300 is modified (N6-(pyridoxal phosphate)lysine). Positions 338–357 (KNGVSSEQSANTNGSEKESW) are disordered. Polar residues predominate over residues 340 to 351 (GVSSEQSANTNG). Arg492 contacts substrate.

The protein belongs to the group II decarboxylase family. It depends on pyridoxal 5'-phosphate as a cofactor.

It functions in the pathway mycotoxin biosynthesis. Functionally, glutamate decarboxylase-like protein; part of the gene cluster that mediates the biosynthesis of butenolide, a mycotoxin that shows antibiotic activity but does not seem to play a major role in the spread of head blight in wheat. Butenolide is derived from glutamic acid via a 4-acetamido-2-butenoic acid intermediate. The predicted function of the NADH:flavin oxidoreductase FG08077, the cytochrome P450 monooxygenase FG08079, the decarboxylase FG08083, and the putative acetyltransferase FG08082 are consistent with this pathway, however, the respective activities of the butelonide biosynthesis cluster enzymes have still to be experimentally determined. The polypeptide is Glutamate decarboxylase-like protein FG08083 (Gibberella zeae (strain ATCC MYA-4620 / CBS 123657 / FGSC 9075 / NRRL 31084 / PH-1) (Wheat head blight fungus)).